We begin with the raw amino-acid sequence, 672 residues long: Zinc finger protein 271 (672 aa).

Positions 1 to 29 are disordered; the sequence is MEIQFNYESQEHHLLSDGENKTKIGKPAS. Over residues 9 to 22 the composition is skewed to basic and acidic residues; it reads SQEHHLLSDGENKT. A C2H2-type 1; degenerate zinc finger spans residues 80 to 102; the sequence is HNCDEYGQSFVWNTGLFRHRKTH. 19 C2H2-type zinc fingers span residues 107–129, 135–157, 163–185, 191–213, 219–241, 247–269, 275–297, 303–325, 331–353, 359–381, 387–409, 415–437, 443–465, 471–493, 499–521, 527–549, 555–577, 583–605, and 611–633; these read YECD…QRIH, YSCN…QRVH, YKCD…QRIH, YQCS…QRIH, YTCN…QRIH, YPCN…RRIH, YKCN…QRIH, YPCD…QRIH, YPCN…HRIH, YPCS…QRIH, YACN…QRVH, YHCN…QRIH, YLCT…QRIH, YKCS…QRIH, NPCN…QKIH, YKCD…QKIH, and YRCV…EEVH.

The protein belongs to the krueppel C2H2-type zinc-finger protein family.

Its subcellular location is the nucleus. Functionally, may be involved in transcriptional regulation. The protein is Zinc finger protein 271 (ZNF271) of Pongo abelii (Sumatran orangutan).